A 156-amino-acid polypeptide reads, in one-letter code: Small ribosomal subunit protein uS7 (156 aa).

Belongs to the universal ribosomal protein uS7 family. Part of the 30S ribosomal subunit. Contacts proteins S9 and S11.

One of the primary rRNA binding proteins, it binds directly to 16S rRNA where it nucleates assembly of the head domain of the 30S subunit. Is located at the subunit interface close to the decoding center, probably blocks exit of the E-site tRNA. This is Small ribosomal subunit protein uS7 from Desulforudis audaxviator (strain MP104C).